The sequence spans 520 residues: Keratin, type II cytoskeletal 4 (520 aa).

A head region spans residues 1–136 (MIARQQCVRG…DPEIQKVRTE (136 aa)). Position 13 is an omega-N-methylarginine (R13). Residues 137-172 (EREQIKLLNNKFASFIDKVQFLEQQNKVLETKWNLL) form a coil 1A region. An IF rod domain is found at 137 to 450 (EREQIKLLNN…KLLEGEEYRM (314 aa)). Residues 173–191 (QQQTTTTSSKNLEPLFETY) are linker 1. Residues 192-284 (LSVLRKQLDT…LYDAELSQMQ (93 aa)) form a coil 1B region. A linker 12 region spans residues 285–307 (THVSDTSVVLSMDNNRNLDLDSI). The tract at residues 308–447 (IAEVRAQYEE…TYRKLLEGEE (140 aa)) is coil 2. Residues 448–520 (YRMSGECQSA…ISTTTLNKRR (73 aa)) are tail. Residues 500-520 (GSVSGSSSSKIISTTTLNKRR) are disordered. Residues 503–514 (SGSSSSKIISTT) show a composition bias toward low complexity.

Belongs to the intermediate filament family. In terms of assembly, heterotetramer of two type I and two type II keratins. Keratin-4 is generally associated with keratin-13. In terms of tissue distribution, detected in the suprabasal layer of the stratified epithelium of the esophagus, exocervix, vagina, mouth and lingual mucosa, and in cells and cell clusters in the mucosa and serous gland ducts of the esophageal submucosa (at protein level). Expressed widely in the exocervix and esophageal epithelium, with lowest levels detected in the basal cell layer.

This Homo sapiens (Human) protein is Keratin, type II cytoskeletal 4 (KRT4).